We begin with the raw amino-acid sequence, 300 residues long: 7-methylguanosine phosphate-specific 5'-nucleotidase (300 aa).

The active-site Nucleophile is aspartate 41. Residues aspartate 41 and aspartate 43 each contribute to the Mg(2+) site. Aspartate 43 acts as the Proton donor in catalysis. A CMP-binding site is contributed by glutamate 88. A N(7)-methyl-GMP-binding site is contributed by glutamate 88. Residues 156 to 157 and lysine 205 contribute to the substrate site; that span reads SA. Aspartate 230 lines the Mg(2+) pocket. Lysine 256 is subject to N6-acetyllysine.

The protein belongs to the pyrimidine 5'-nucleotidase family. In terms of assembly, monomer.

It localises to the cytoplasm. The enzyme catalyses N(7)-methyl-GMP + H2O = N(7)-methylguanosine + phosphate. It carries out the reaction CMP + H2O = cytidine + phosphate. The catalysed reaction is a ribonucleoside 5'-phosphate + H2O = a ribonucleoside + phosphate. Functionally, specifically hydrolyzes 7-methylguanosine monophosphate (m(7)GMP) to 7-methylguanosine and inorganic phosphate. The specific activity for m(7)GMP may protect cells against undesired salvage of m(7)GMP and its incorporation into nucleic acids. Also has weak activity for CMP. UMP and purine nucleotides are poor substrates. The sequence is that of 7-methylguanosine phosphate-specific 5'-nucleotidase (Nt5c3b) from Mus musculus (Mouse).